The following is a 337-amino-acid chain: BRI1 kinase inhibitor 1 (337 aa).

Residues 1-25 (METNLQQVKNSSQTFSEKQNPKQEA) show a composition bias toward polar residues. Disordered stretches follow at residues 1-38 (METNLQQVKNSSQTFSEKQNPKQEASPSPISSTCSSPS) and 51-72 (SSSSKHISPTLRSPSKTTSSYQ). Over residues 26–38 (SPSPISSTCSSPS) the composition is skewed to low complexity. Phosphotyrosine is present on tyrosine 211. Positions 270–310 (SAPASMRTSPTNSGHLRVSTAGLSSSSGSTSSSSSDSTMEE) are disordered. Residues 288-310 (STAGLSSSSGSTSSSSSDSTMEE) are compositionally biased toward low complexity.

In terms of assembly, interacts (via C-terminus) with BRI1 (via kinase domain). Phosphorylated on Tyr-211 in response to brassinosteroid perception, leading to its inactivation: once phosphorylated, displaced into the cytosol where it is inactive. In terms of tissue distribution, expressed in leaves, petioles, shoot apices, hypocotyls, roots and flowers.

It is found in the cell membrane. Its subcellular location is the cytoplasm. In terms of biological role, negative regulator of brassinosteroid signaling. When associated to the membrane, limits the interaction of BRI1 with BAK1 by binding to the kinase-inactive form of BRI1. In Arabidopsis thaliana (Mouse-ear cress), this protein is BRI1 kinase inhibitor 1 (BKI1).